A 237-amino-acid chain; its full sequence is Phosphatidylserine decarboxylase proenzyme (237 aa).

Residue S206 is the Schiff-base intermediate with substrate; via pyruvic acid of the active site. S206 is modified (pyruvic acid (Ser); by autocatalysis).

The protein belongs to the phosphatidylserine decarboxylase family. PSD-A subfamily. As to quaternary structure, heterodimer of a large membrane-associated beta subunit and a small pyruvoyl-containing alpha subunit. Requires pyruvate as cofactor. Post-translationally, is synthesized initially as an inactive proenzyme. Formation of the active enzyme involves a self-maturation process in which the active site pyruvoyl group is generated from an internal serine residue via an autocatalytic post-translational modification. Two non-identical subunits are generated from the proenzyme in this reaction, and the pyruvate is formed at the N-terminus of the alpha chain, which is derived from the carboxyl end of the proenzyme. The post-translation cleavage follows an unusual pathway, termed non-hydrolytic serinolysis, in which the side chain hydroxyl group of the serine supplies its oxygen atom to form the C-terminus of the beta chain, while the remainder of the serine residue undergoes an oxidative deamination to produce ammonia and the pyruvoyl prosthetic group on the alpha chain.

It is found in the cell membrane. It catalyses the reaction a 1,2-diacyl-sn-glycero-3-phospho-L-serine + H(+) = a 1,2-diacyl-sn-glycero-3-phosphoethanolamine + CO2. Its pathway is phospholipid metabolism; phosphatidylethanolamine biosynthesis; phosphatidylethanolamine from CDP-diacylglycerol: step 2/2. In terms of biological role, catalyzes the formation of phosphatidylethanolamine (PtdEtn) from phosphatidylserine (PtdSer). This is Phosphatidylserine decarboxylase proenzyme from Rhodococcus jostii (strain RHA1).